Reading from the N-terminus, the 673-residue chain is Protein kinase C delta type (673 aa).

The 106-residue stretch at 1 to 106 (MAPFLRISFN…KNNGKAEFWL (106 aa)) folds into the C2 domain. A phosphothreonine mark is found at T43 and T50. Y64 is subject to Phosphotyrosine. S130 bears the Phosphoserine mark. Residue T141 is modified to Phosphothreonine. Phosphotyrosine is present on Y155. A Phorbol-ester/DAG-type 1 zinc finger spans residues 158-208 (NHEFIATFFGQPTFCSVCKEFVWGLNKQGYKCRQCNAAIHKKCIDKIIGRC). At T218 the chain carries Phosphothreonine. The Phorbol-ester/DAG-type 2 zinc-finger motif lies at 230–280 (PHRFKVYNYMSPTFCDHCGTLLWGLVKQGLKCEDCGMNVHHKCREKVANLC). The residue at position 299 (S299) is a Phosphoserine; by autocatalysis. A phosphotyrosine; by SRC mark is found at Y311 and Y332. The Protein kinase domain maps to 347–601 (FTFQKVLGKG…TGNIRLHPFF (255 aa)). Residue 353–361 (LGKGSFGKV) participates in ATP binding. A Phosphotyrosine modification is found at Y372. Residue K376 coordinates ATP. The residue at position 449 (T449) is a Phosphothreonine. D471 (proton acceptor) is an active-site residue. Position 504 is a phosphoserine (S504). T505 carries the post-translational modification Phosphothreonine; by autocatalysis. At Y565 the chain carries Phosphotyrosine. In terms of domain architecture, AGC-kinase C-terminal spans 602-673 (KTINWNLLEK…VNPKYEQFLE (72 aa)). S643, S652, and S662 each carry phosphoserine.

This sequence belongs to the protein kinase superfamily. AGC Ser/Thr protein kinase family. PKC subfamily. Interacts with PDPK1 (via N-terminal region). Interacts with RAD9A. Interacts with CDCP1. Interacts with MUC1. Interacts with VASP. Interacts with CAVIN3. Interacts with PRKD2 (via N-terminus and zing-finger domain 1 and 2) in response to oxidative stress; the interaction is independent of PRKD2 tyrosine phosphorylation. Interacts with PLSC3; interaction is enhanced by UV irradiation. Post-translationally, autophosphorylated and/or phosphorylated at Thr-505, within the activation loop; phosphorylation at Thr-505 is not a prerequisite for enzymatic activity. Autophosphorylated at Ser-299. Upon TNFSF10/TRAIL treatment, phosphorylated at Tyr-155; phosphorylation is required for its translocation to the endoplasmic reticulum and cleavage by caspase-3. Phosphorylated at Tyr-311, Tyr-332 and Tyr-565; phosphorylation of Tyr-311 and Tyr-565 following thrombin or zymosan stimulation potentiates its kinase activity. Phosphorylated by protein kinase PDPK1; phosphorylation is inhibited by the apoptotic C-terminal cleavage product of PKN2. Phosphorylated at Tyr-311 and Tyr-332 by SRC; phosphorylation leads to enhanced autophosphorylation at Thr-505. Phosphorylated at Tyr-311 through a SYK and SRC mechanism downstream of C-type lectin receptors activation, promoting its activation. Proteolytically cleaved into a catalytic subunit and a regulatory subunit by caspase-3 during apoptosis which results in kinase activation.

It localises to the cytoplasm. It is found in the nucleus. The protein resides in the perinuclear region. The protein localises to the cell membrane. Its subcellular location is the mitochondrion. It localises to the endomembrane system. It catalyses the reaction L-seryl-[protein] + ATP = O-phospho-L-seryl-[protein] + ADP + H(+). The enzyme catalyses L-threonyl-[protein] + ATP = O-phospho-L-threonyl-[protein] + ADP + H(+). It carries out the reaction L-tyrosyl-[protein] + ATP = O-phospho-L-tyrosyl-[protein] + ADP + H(+). Its activity is regulated as follows. Novel PKCs (PRKCD, PRKCE, PRKCH and PRKCQ) are calcium-insensitive, but activated by diacylglycerol (DAG) and phosphatidylserine. Three specific sites; Thr-505 (activation loop of the kinase domain), Ser-643 (turn motif) and Ser-662 (hydrophobic region), need to be phosphorylated for its full activation. Activated by caspase-3 (CASP3) cleavage during apoptosis. After cleavage, the pseudosubstrate motif in the regulatory subunit is released from the substrate recognition site of the catalytic subunit, which enables PRKCD to become constitutively activated. The catalytic subunit which displays properties of a sphingosine-dependent protein kinase is activated by D-erythro-sphingosine (Sph) or N,N-dimethyl-D-erythrosphingosine (DMS) or N,N,N-trimethyl-D-erythrosphingosine (TMS), but not by ceramide or Sph-1-P and is strongly inhibited by phosphatidylserine. Functionally, calcium-independent, phospholipid- and diacylglycerol (DAG)-dependent serine/threonine-protein kinase that plays contrasting roles in cell death and cell survival by functioning as a pro-apoptotic protein during DNA damage-induced apoptosis, but acting as an anti-apoptotic protein during cytokine receptor-initiated cell death, is involved in tumor suppression, is required for oxygen radical production by NADPH oxidase and acts as a positive or negative regulator in platelet functional responses. Upon DNA damage, activates the promoter of the death-promoting transcription factor BCLAF1/Btf to trigger BCLAF1-mediated p53/TP53 gene transcription and apoptosis. In response to oxidative stress, interact with and activate CHUK/IKKA in the nucleus, causing the phosphorylation of p53/TP53. In the case of ER stress or DNA damage-induced apoptosis, can form a complex with the tyrosine-protein kinase ABL1 which trigger apoptosis independently of p53/TP53. In cytosol can trigger apoptosis by activating MAPK11 or MAPK14, inhibiting AKT1 and decreasing the level of X-linked inhibitor of apoptosis protein (XIAP), whereas in nucleus induces apoptosis via the activation of MAPK8 or MAPK9. Upon ionizing radiation treatment, is required for the activation of the apoptosis regulators BAX and BAK, which trigger the mitochondrial cell death pathway. Can phosphorylate MCL1 and target it for degradation which is sufficient to trigger for BAX activation and apoptosis. Is required for the control of cell cycle progression both at G1/S and G2/M phases. Mediates phorbol 12-myristate 13-acetate (PMA)-induced inhibition of cell cycle progression at G1/S phase by up-regulating the CDK inhibitor CDKN1A/p21 and inhibiting the cyclin CCNA2 promoter activity. In response to UV irradiation can phosphorylate CDK1, which is important for the G2/M DNA damage checkpoint activation. Can protect glioma cells from the apoptosis induced by TNFSF10/TRAIL, probably by inducing increased phosphorylation and subsequent activation of AKT1. Can also act as tumor suppressor upon mitogenic stimulation with PMA or TPA. In N-formyl-methionyl-leucyl-phenylalanine (fMLP)-treated cells, is required for NCF1 (p47-phox) phosphorylation and activation of NADPH oxidase activity, and regulates TNF-elicited superoxide anion production in neutrophils, by direct phosphorylation and activation of NCF1 or indirectly through MAPK1/3 (ERK1/2) signaling pathways. Involved in antifungal immunity by mediating phosphorylation and activation of CARD9 downstream of C-type lectin receptors activation, promoting interaction between CARD9 and BCL10, followed by activation of NF-kappa-B and MAP kinase p38 pathways. May also play a role in the regulation of NADPH oxidase activity in eosinophil after stimulation with IL5, leukotriene B4 or PMA. In collagen-induced platelet aggregation, acts a negative regulator of filopodia formation and actin polymerization by interacting with and negatively regulating VASP phosphorylation. Downstream of PAR1, PAR4 and CD36/GP4 receptors, regulates differentially platelet dense granule secretion; acts as a positive regulator in PAR-mediated granule secretion, whereas it negatively regulates CD36/GP4-mediated granule release. Phosphorylates MUC1 in the C-terminal and regulates the interaction between MUC1 and beta-catenin. The catalytic subunit phosphorylates 14-3-3 proteins (YWHAB, YWHAZ and YWHAH) in a sphingosine-dependent fashion. Phosphorylates ELAVL1 in response to angiotensin-2 treatment. Phosphorylates mitochondrial phospholipid scramblase 3 (PLSCR3), resulting in increased cardiolipin expression on the mitochondrial outer membrane which facilitates apoptosis. Phosphorylates SMPD1 which induces SMPD1 secretion. Truncated isoform 2 is inactive. This Rattus norvegicus (Rat) protein is Protein kinase C delta type.